The primary structure comprises 201 residues: 2-phospho-L-lactate guanylyltransferase (201 aa).

Belongs to the CofC family. As to quaternary structure, homodimer.

The enzyme catalyses (2S)-2-phospholactate + GTP + H(+) = (2S)-lactyl-2-diphospho-5'-guanosine + diphosphate. The protein operates within cofactor biosynthesis; coenzyme F420 biosynthesis. Guanylyltransferase that catalyzes the activation of (2S)-2-phospholactate (2-PL) as (2S)-lactyl-2-diphospho-5'-guanosine, via the condensation of 2-PL with GTP. It is involved in the biosynthesis of coenzyme F420, a hydride carrier cofactor. The chain is 2-phospho-L-lactate guanylyltransferase from Natronomonas pharaonis (strain ATCC 35678 / DSM 2160 / CIP 103997 / JCM 8858 / NBRC 14720 / NCIMB 2260 / Gabara) (Halobacterium pharaonis).